The following is a 44-amino-acid chain: Photosystem I reaction center subunit IX (44 aa).

The helical transmembrane segment at 7-27 threads the bilayer; that stretch reads YLSVAPVVSTLWFAALAGLLI.

This sequence belongs to the PsaJ family.

Its subcellular location is the plastid. The protein localises to the chloroplast thylakoid membrane. May help in the organization of the PsaE and PsaF subunits. The protein is Photosystem I reaction center subunit IX of Lotus japonicus (Lotus corniculatus var. japonicus).